A 310-amino-acid chain; its full sequence is ADP-L-glycero-D-manno-heptose-6-epimerase (310 aa).

Residues 10-11 (FI), 31-32 (DN), K38, K53, 75-79 (EGACS), and N92 each bind NADP(+). The active-site Proton acceptor is the Y140. An NADP(+)-binding site is contributed by K144. A substrate-binding site is contributed by N169. Residues V170 and K178 each coordinate NADP(+). The Proton acceptor role is filled by K178. Substrate is bound by residues S180, H187, 201–204 (FAGS), R209, and Y272.

The protein belongs to the NAD(P)-dependent epimerase/dehydratase family. HldD subfamily. As to quaternary structure, homopentamer. NADP(+) serves as cofactor.

It carries out the reaction ADP-D-glycero-beta-D-manno-heptose = ADP-L-glycero-beta-D-manno-heptose. It participates in nucleotide-sugar biosynthesis; ADP-L-glycero-beta-D-manno-heptose biosynthesis; ADP-L-glycero-beta-D-manno-heptose from D-glycero-beta-D-manno-heptose 7-phosphate: step 4/4. Catalyzes the interconversion between ADP-D-glycero-beta-D-manno-heptose and ADP-L-glycero-beta-D-manno-heptose via an epimerization at carbon 6 of the heptose. This is ADP-L-glycero-D-manno-heptose-6-epimerase from Yersinia pseudotuberculosis serotype O:1b (strain IP 31758).